We begin with the raw amino-acid sequence, 297 residues long: Oxidoreductase R1 (297 aa).

It belongs to the asaB hydroxylase/desaturase family.

It participates in secondary metabolite biosynthesis. In terms of biological role, oxidoreductase; part of the gene cluster that mediates the biosynthesis of squalestatin S1 (SQS1, also known as zaragozic acid A), a heavily oxidized fungal polyketide that offers potent cholesterol lowering activity by targeting squalene synthase (SS). SQS1 is composed of a 2,8-dioxobicyclic[3.2.1]octane-3,4,5-tricarboxyclic acid core that is connected to two lipophilic polyketide arms. These initial steps feature the priming of an unusual benzoic acid starter unit onto the highly reducing polyketide synthase pks2, followed by oxaloacetate extension and product release to generate a tricarboxylic acid containing product. The phenylalanine ammonia lyase (PAL) M7 and the acyl-CoA ligase M9 are involved in transforming phenylalanine into benzoyl-CoA. The citrate synthase-like protein R3 is involved in connecting the C-alpha-carbons of the hexaketide chain and oxaloacetate to afford the tricarboxylic acid unit. The potential hydrolytic enzymes, M8 and M10, are in close proximity to pks2 and may participate in product release. On the other side, the tetraketide arm is synthesized by a the squalestatin tetraketide synthase pks1 and enzymatically esterified to the core in the last biosynthetic step, by the acetyltransferase M4. The biosynthesis of the tetraketide must involve 3 rounds of chain extension. After the first and second rounds methyl-transfer occurs, and in all rounds of extension the ketoreductase and dehydratase are active. The enoyl reductase and C-MeT of pks1 are not active in the final round of extension. The acetyltransferase M4 appears to have a broad substrate selectivity for its acyl CoA substrate, allowing the in vitro synthesis of novel squalestatins. The biosynthesis of SQS1 requires several oxidative steps likely performed by oxidoreductases M1, R1 and R2. Finally, in support of the identification of the cluster as being responsible for SQS1 production, the cluster contains a gene encoding a putative squalene synthase (SS) R6, suggesting a likely mechanism for self-resistance. This Phoma sp. (strain ATCC 20986 / MF5453) protein is Oxidoreductase R1.